The chain runs to 195 residues: uncharacterized protein (195 aa).

The region spanning 6 to 66 is the HTH tetR-type domain; the sequence is VESRKRLLKA…ELITDFHSRV (61 aa). A DNA-binding region (H-T-H motif) is located at residues 29–48; the sequence is KVSEIVKKAGFTQPSFYLYF.

This is an uncharacterized protein from Bacillus subtilis (strain 168).